We begin with the raw amino-acid sequence, 87 residues long: MDLFKFFSKQSSKDVAKERLKLILIQDRNSISPDVLESIREDMLKVISKYIEIDNEDVDIKMSSVEEIEGMSPALIASIPIKRIKKK.

This sequence belongs to the MinE family.

Functionally, prevents the cell division inhibition by proteins MinC and MinD at internal division sites while permitting inhibition at polar sites. This ensures cell division at the proper site by restricting the formation of a division septum at the midpoint of the long axis of the cell. The chain is Cell division topological specificity factor from Clostridium botulinum (strain ATCC 19397 / Type A).